A 37-amino-acid polypeptide reads, in one-letter code: Cytochrome b6-f complex subunit 5 (37 aa).

The chain crosses the membrane as a helical span at residues 5 to 25 (LLSGIILGLIPITICGLFFTA).

Belongs to the PetG family. The 4 large subunits of the cytochrome b6-f complex are cytochrome b6, subunit IV (17 kDa polypeptide, PetD), cytochrome f and the Rieske protein, while the 4 small subunits are PetG, PetL, PetM and PetN. The complex functions as a dimer.

Its subcellular location is the plastid. The protein resides in the chloroplast thylakoid membrane. Component of the cytochrome b6-f complex, which mediates electron transfer between photosystem II (PSII) and photosystem I (PSI), cyclic electron flow around PSI, and state transitions. PetG is required for either the stability or assembly of the cytochrome b6-f complex. The chain is Cytochrome b6-f complex subunit 5 from Euglena gracilis.